The primary structure comprises 449 residues: Glycine--tRNA ligase (449 aa).

Positions 100 and 158 each coordinate substrate. Residues 190-192 (RNE), 200-205 (FRVREF), 275-276 (EL), and 319-322 (GIER) contribute to the ATP site. Substrate is bound at residue 205–209 (FEQFE). 315–319 (EPSVG) lines the substrate pocket.

Belongs to the class-II aminoacyl-tRNA synthetase family. In terms of assembly, homodimer.

It localises to the cytoplasm. It carries out the reaction tRNA(Gly) + glycine + ATP = glycyl-tRNA(Gly) + AMP + diphosphate. Catalyzes the attachment of glycine to tRNA(Gly). In Mycoplasma pneumoniae (strain ATCC 29342 / M129 / Subtype 1) (Mycoplasmoides pneumoniae), this protein is Glycine--tRNA ligase.